Reading from the N-terminus, the 224-residue chain is Thiamine-phosphate synthase (224 aa).

Residues 43 to 47 (QYRPK) and Asn75 each bind 4-amino-2-methyl-5-(diphosphooxymethyl)pyrimidine. Residues Asp76 and Asp95 each contribute to the Mg(2+) site. Ser114 serves as a coordination point for 4-amino-2-methyl-5-(diphosphooxymethyl)pyrimidine. Residue 141–143 (SAT) coordinates 2-[(2R,5Z)-2-carboxy-4-methylthiazol-5(2H)-ylidene]ethyl phosphate. Lys144 is a binding site for 4-amino-2-methyl-5-(diphosphooxymethyl)pyrimidine. Residue Gly171 participates in 2-[(2R,5Z)-2-carboxy-4-methylthiazol-5(2H)-ylidene]ethyl phosphate binding.

Belongs to the thiamine-phosphate synthase family. The cofactor is Mg(2+).

The enzyme catalyses 2-[(2R,5Z)-2-carboxy-4-methylthiazol-5(2H)-ylidene]ethyl phosphate + 4-amino-2-methyl-5-(diphosphooxymethyl)pyrimidine + 2 H(+) = thiamine phosphate + CO2 + diphosphate. It carries out the reaction 2-(2-carboxy-4-methylthiazol-5-yl)ethyl phosphate + 4-amino-2-methyl-5-(diphosphooxymethyl)pyrimidine + 2 H(+) = thiamine phosphate + CO2 + diphosphate. The catalysed reaction is 4-methyl-5-(2-phosphooxyethyl)-thiazole + 4-amino-2-methyl-5-(diphosphooxymethyl)pyrimidine + H(+) = thiamine phosphate + diphosphate. It participates in cofactor biosynthesis; thiamine diphosphate biosynthesis; thiamine phosphate from 4-amino-2-methyl-5-diphosphomethylpyrimidine and 4-methyl-5-(2-phosphoethyl)-thiazole: step 1/1. Functionally, condenses 4-methyl-5-(beta-hydroxyethyl)thiazole monophosphate (THZ-P) and 2-methyl-4-amino-5-hydroxymethyl pyrimidine pyrophosphate (HMP-PP) to form thiamine monophosphate (TMP). The chain is Thiamine-phosphate synthase from Methylococcus capsulatus (strain ATCC 33009 / NCIMB 11132 / Bath).